The chain runs to 278 residues: Rhomboid protease GlpG (278 aa).

6 consecutive transmembrane segments (helical) span residues 94–114, 143–163, 175–195, 196–216, 224–241, and 245–267; these read AGPL…LMLI, AFLH…WYLG, LLVL…LFSG, ANFG…WLTG, ISLP…LIAG, and ILGL…LMAF. Catalysis depends on Ser202, which acts as the Nucleophile. His255 is an active-site residue.

The protein belongs to the peptidase S54 family.

It localises to the cell inner membrane. The catalysed reaction is Cleaves type-1 transmembrane domains using a catalytic dyad composed of serine and histidine that are contributed by different transmembrane domains.. In terms of biological role, rhomboid-type serine protease that catalyzes intramembrane proteolysis. This is Rhomboid protease GlpG from Yersinia pseudotuberculosis serotype I (strain IP32953).